Consider the following 117-residue polypeptide: UPF0375 protein Y45F10C.2 (117 aa).

The signal sequence occupies residues 1–20; that stretch reads MNSFVSTVLLLSVTIALVSG.

It belongs to the UPF0375 family. As to expression, expressed in the uterine epithelium.

The protein localises to the secreted. Its function is as follows. Negatively regulates the egg-laying rate by promoting retention of fertilized eggs. The sequence is that of UPF0375 protein Y45F10C.2 from Caenorhabditis elegans.